The sequence spans 276 residues: Dermonecrotic toxin LdSicTox-alphaIB2 (276 aa).

Residue H5 is part of the active site. 2 residues coordinate Mg(2+): E25 and D27. H41 acts as the Nucleophile in catalysis. 2 cysteine pairs are disulfide-bonded: C45-C51 and C47-C190. D85 contributes to the Mg(2+) binding site. N-linked (GlcNAc...) asparagine glycosylation is present at N253.

It belongs to the arthropod phospholipase D family. Class II subfamily. Requires Mg(2+) as cofactor. As to expression, expressed by the venom gland.

The protein localises to the secreted. It carries out the reaction an N-(acyl)-sphingosylphosphocholine = an N-(acyl)-sphingosyl-1,3-cyclic phosphate + choline. The catalysed reaction is an N-(acyl)-sphingosylphosphoethanolamine = an N-(acyl)-sphingosyl-1,3-cyclic phosphate + ethanolamine. The enzyme catalyses a 1-acyl-sn-glycero-3-phosphocholine = a 1-acyl-sn-glycero-2,3-cyclic phosphate + choline. It catalyses the reaction a 1-acyl-sn-glycero-3-phosphoethanolamine = a 1-acyl-sn-glycero-2,3-cyclic phosphate + ethanolamine. Functionally, dermonecrotic toxins cleave the phosphodiester linkage between the phosphate and headgroup of certain phospholipids (sphingolipid and lysolipid substrates), forming an alcohol (often choline) and a cyclic phosphate. This toxin acts on sphingomyelin (SM). It may also act on ceramide phosphoethanolamine (CPE), lysophosphatidylcholine (LPC) and lysophosphatidylethanolamine (LPE), but not on lysophosphatidylserine (LPS), and lysophosphatidylglycerol (LPG). It acts by transphosphatidylation, releasing exclusively cyclic phosphate products as second products. Induces dermonecrosis, hemolysis, increased vascular permeability, edema, inflammatory response, and platelet aggregation. The protein is Dermonecrotic toxin LdSicTox-alphaIB2 of Loxosceles deserta (Desert recluse spider).